We begin with the raw amino-acid sequence, 191 residues long: NADH-quinone oxidoreductase subunit B (191 aa).

Positions 52, 53, 118, and 148 each coordinate [4Fe-4S] cluster.

Belongs to the complex I 20 kDa subunit family. NDH-1 is composed of 14 different subunits. Subunits NuoB, C, D, E, F, and G constitute the peripheral sector of the complex. It depends on [4Fe-4S] cluster as a cofactor.

It is found in the cell inner membrane. It carries out the reaction a quinone + NADH + 5 H(+)(in) = a quinol + NAD(+) + 4 H(+)(out). Functionally, NDH-1 shuttles electrons from NADH, via FMN and iron-sulfur (Fe-S) centers, to quinones in the respiratory chain. The immediate electron acceptor for the enzyme in this species is believed to be a menaquinone. Couples the redox reaction to proton translocation (for every two electrons transferred, four hydrogen ions are translocated across the cytoplasmic membrane), and thus conserves the redox energy in a proton gradient. The protein is NADH-quinone oxidoreductase subunit B of Azobacteroides pseudotrichonymphae genomovar. CFP2.